A 394-amino-acid chain; its full sequence is Cystathionine gamma-lyase (394 aa).

The disordered stretch occupies residues 37 to 56; sequence KQSSPANPIGTYEYSRSQNP. Positions 52, 104, and 109 each coordinate substrate. Lys204 carries the post-translational modification N6-(pyridoxal phosphate)lysine. Glu334 contacts substrate. The residue at position 362 (Ser362) is a Phosphoserine.

Belongs to the trans-sulfuration enzymes family. In terms of assembly, homotetramer. The cofactor is pyridoxal 5'-phosphate.

It is found in the cytoplasm. The catalysed reaction is L,L-cystathionine + H2O = 2-oxobutanoate + L-cysteine + NH4(+). Its pathway is amino-acid biosynthesis; L-cysteine biosynthesis; L-cysteine from L-homocysteine and L-serine: step 2/2. Catalyzes the production of cysteine from cystathionine in the reverse transsulfuration pathway for the biosynthesis of sulfur-containing amino acids cysteine and methionine. In this pathway, homocysteine sulfur is converted to cysteine sulfur. Also has cystathionine beta-lyase and cystathionine gamma-synthase activities in vitro. Cystathionine beta-lyase may be physiological, while cystathionine gamma-synthase activity is not, as the required substrate O-succinyl-L-homoserine(OSH) does not occur naturally in S.cerevisiae. This is Cystathionine gamma-lyase from Saccharomyces cerevisiae (strain ATCC 204508 / S288c) (Baker's yeast).